Consider the following 580-residue polypeptide: Glyco-Gag protein (580 aa).

At 1 to 51 (MSGASSGTAIGAHLFGVSPEYRVLIGDGGAGPSKSLSEVSFSVWYRSRAAR) the chain is on the cytoplasmic side. The chain crosses the membrane as a helical span at residues 52–72 (LVILCLVASFLVPCLTFLIAE). The Extracellular portion of the chain corresponds to 73–580 (AVMGQTVTTP…ANSTLLNLED (508 aa)). Residue Asn-134 is glycosylated (N-linked (GlcNAc...) asparagine; by host). Disordered stretches follow at residues 171–282 (VRPF…NRPQ), 491–514 (ETPEEREERLWQRQEERDKKRHKE), and 560–580 (RDCPKRPRKKPANSTLLNLED). Positions 174-193 (FLPPPKPPTPLPQPLSPQPS) are enriched in pro residues. The segment covering 194–203 (APLTSSLYPV) has biased composition (low complexity). Composition is skewed to pro residues over residues 204–220 (VPKPDPPKPPVLPPDPS) and 230–245 (EPPPYPGGHGPPPSGP). Positions 491–508 (ETPEEREERLWQRQEERD) are enriched in basic and acidic residues. A compositionally biased stretch (polar residues) spans 571–580 (ANSTLLNLED). Residue Asn-572 is glycosylated (N-linked (GlcNAc...) asparagine; by host).

In terms of processing, glycosylated by host. Post-translationally, cleaved by host near the middle of the molecule, releasing the c-terminal half containing capsid and nucleoprotein domains op GAG.

The protein localises to the host cell membrane. In terms of biological role, plays a role in viral particle release. Presumably acts by facilitating the fission of the virion bud at the cell surface. The protein is Glyco-Gag protein of Feline leukemia virus.